The chain runs to 245 residues: tRNA (guanine-N(1)-)-methyltransferase (245 aa).

S-adenosyl-L-methionine is bound by residues Gly112 and 132–137 (IGDFVL).

It belongs to the RNA methyltransferase TrmD family. Homodimer.

It localises to the cytoplasm. The catalysed reaction is guanosine(37) in tRNA + S-adenosyl-L-methionine = N(1)-methylguanosine(37) in tRNA + S-adenosyl-L-homocysteine + H(+). Its function is as follows. Specifically methylates guanosine-37 in various tRNAs. This Geobacter sulfurreducens (strain ATCC 51573 / DSM 12127 / PCA) protein is tRNA (guanine-N(1)-)-methyltransferase.